The following is a 600-amino-acid chain: Alpha pinene synthase, chloroplastic (600 aa).

The tract at residues 1-26 (MSSISMHARPLNISAANNHHPSWDRR) is disordered. The N-terminal 31 residues, 1 to 31 (MSSISMHARPLNISAANNHHPSWDRRVSKPR), are a transit peptide targeting the chloroplast. 4 residues coordinate Mg(2+): aspartate 354, aspartate 358, aspartate 498, and glutamate 506. The DDXXD motif signature appears at 354 to 358 (DDVYD).

It belongs to the terpene synthase family. Tpsa subfamily. Mg(2+) serves as cofactor. It depends on Mn(2+) as a cofactor. As to expression, barely detectable in leaves.

The protein resides in the plastid. It is found in the chloroplast. The catalysed reaction is (2E)-geranyl diphosphate = alpha-pinene + diphosphate. Its pathway is secondary metabolite biosynthesis; terpenoid biosynthesis. Monoterpene synthase involved in the biosynthesis of volatile compounds widely used in aromatherapy and folk medicine, and present in culinary herbs. Mediates the conversion of (2E)-geranyl diphosphate (GPP) into alpha-pinene and, as minor compounds, into alpha-phellandrene, limonene and alpha-terpinolene. The sequence is that of Alpha pinene synthase, chloroplastic from Lavandula stoechas (Butterfly lavender).